We begin with the raw amino-acid sequence, 312 residues long: Structure-specific endonuclease subunit SLX1 (312 aa).

The region spanning 9-92 (DFYGCYLLQS…QHGYQTRYIK (84 aa)) is the GIY-YIG domain. The SLX1-type zinc-finger motif lies at 219–282 (CQFCNKIIKH…IPQSPKCPKC (64 aa)).

Belongs to the SLX1 family. As to quaternary structure, forms a heterodimer with SLX4. Requires a divalent metal cation as cofactor.

The protein resides in the nucleus. Functionally, catalytic subunit of the SLX1-SLX4 structure-specific endonuclease that resolves DNA secondary structures generated during DNA repair and recombination. Has endonuclease activity towards branched DNA substrates, introducing single-strand cuts in duplex DNA close to junctions with ss-DNA. The chain is Structure-specific endonuclease subunit SLX1 from Candida glabrata (strain ATCC 2001 / BCRC 20586 / JCM 3761 / NBRC 0622 / NRRL Y-65 / CBS 138) (Yeast).